The chain runs to 777 residues: Isoamylase (777 aa).

The N-terminal stretch at 1–32 (MDPHAPQRQRSGQRLRALALAALACALSPAHA) is a signal peptide. Residues Asp-162, Glu-263, Thr-264, Asn-266, and Asp-293 each coordinate Ca(2+). Asp-410 acts as the Nucleophile in catalysis. Cysteines 419 and 423 form a disulfide. The Proton donor role is filled by Glu-458.

Belongs to the glycosyl hydrolase 13 family. As to quaternary structure, monomer. Ca(2+) is required as a cofactor.

The enzyme catalyses Hydrolysis of (1-&gt;6)-alpha-D-glucosidic branch linkages in glycogen, amylopectin and their beta-limit dextrins.. Has a high rate of hydrolysis for glycogen. Does not cleave pullulan. The protein is Isoamylase (iam) of Flavobacterium sp.